Here is a 227-residue protein sequence, read N- to C-terminus: MISSKASDYQQRIGYVFTDPSLLLQALRHCSAGTPHNERLEFLGDSVVNLLIAEALFQRWPRADEGALTRARSELVRETSLASIARTMQLGEQLILGPGELKSGGHRRDSILADAVEAVIAAIYLDADLATCRTVVLPWFETALTALPVGKPEKDPKTRLQEWLQARQWSLPVYELIFESGDPHTKHFRVSCTLGELKLRTEGEGSSRRLAEQDAASHAIDQLDSNK.

The region spanning 6-128 (ASDYQQRIGY…VIAAIYLDAD (123 aa)) is the RNase III domain. Glu-41 contributes to the Mg(2+) binding site. Residue Asp-45 is part of the active site. Residues Asp-114 and Glu-117 each contribute to the Mg(2+) site. Residue Glu-117 is part of the active site. The DRBM domain occupies 155–225 (DPKTRLQEWL…ASHAIDQLDS (71 aa)). Positions 203 to 212 (GEGSSRRLAE) are enriched in basic and acidic residues. Residues 203–227 (GEGSSRRLAEQDAASHAIDQLDSNK) form a disordered region.

This sequence belongs to the ribonuclease III family. In terms of assembly, homodimer. Mg(2+) is required as a cofactor.

The protein resides in the cytoplasm. The catalysed reaction is Endonucleolytic cleavage to 5'-phosphomonoester.. Its function is as follows. Digests double-stranded RNA. Involved in the processing of primary rRNA transcript to yield the immediate precursors to the large and small rRNAs (23S and 16S). Processes some mRNAs, and tRNAs when they are encoded in the rRNA operon. Processes pre-crRNA and tracrRNA of type II CRISPR loci if present in the organism. In Xylella fastidiosa (strain 9a5c), this protein is Ribonuclease 3.